The chain runs to 122 residues: Large ribosomal subunit protein uL14 (122 aa).

This sequence belongs to the universal ribosomal protein uL14 family. As to quaternary structure, part of the 50S ribosomal subunit. Forms a cluster with proteins L3 and L19. In the 70S ribosome, L14 and L19 interact and together make contacts with the 16S rRNA in bridges B5 and B8.

Functionally, binds to 23S rRNA. Forms part of two intersubunit bridges in the 70S ribosome. The sequence is that of Large ribosomal subunit protein uL14 from Gluconobacter oxydans (strain 621H) (Gluconobacter suboxydans).